A 163-amino-acid chain; its full sequence is Small ribosomal subunit protein uS7 (163 aa).

This sequence belongs to the universal ribosomal protein uS7 family. In terms of assembly, part of the 30S ribosomal subunit. Contacts proteins S9 and S11.

In terms of biological role, one of the primary rRNA binding proteins, it binds directly to 16S rRNA where it nucleates assembly of the head domain of the 30S subunit. Is located at the subunit interface close to the decoding center, probably blocks exit of the E-site tRNA. In Rickettsia bellii (strain RML369-C), this protein is Small ribosomal subunit protein uS7.